Consider the following 591-residue polypeptide: Aspartate--tRNA(Asp/Asn) ligase (591 aa).

Residue E175 participates in L-aspartate binding. The tract at residues 199–202 (QQFK) is aspartate. R221 and H453 together coordinate L-aspartate. 221 to 223 (RDE) lines the ATP pocket. E486 contacts ATP. R493 is an L-aspartate binding site. 538-541 (GIDR) contributes to the ATP binding site.

The protein belongs to the class-II aminoacyl-tRNA synthetase family. Type 1 subfamily. Homodimer.

The protein localises to the cytoplasm. The catalysed reaction is tRNA(Asx) + L-aspartate + ATP = L-aspartyl-tRNA(Asx) + AMP + diphosphate. Its function is as follows. Aspartyl-tRNA synthetase with relaxed tRNA specificity since it is able to aspartylate not only its cognate tRNA(Asp) but also tRNA(Asn). Reaction proceeds in two steps: L-aspartate is first activated by ATP to form Asp-AMP and then transferred to the acceptor end of tRNA(Asp/Asn). The sequence is that of Aspartate--tRNA(Asp/Asn) ligase from Roseobacter denitrificans (strain ATCC 33942 / OCh 114) (Erythrobacter sp. (strain OCh 114)).